The sequence spans 132 residues: Translation initiation factor 5A (132 aa).

Position 37 is a hypusine (lysine 37).

It belongs to the eIF-5A family.

It is found in the cytoplasm. Functionally, functions by promoting the formation of the first peptide bond. This Methanocaldococcus jannaschii (strain ATCC 43067 / DSM 2661 / JAL-1 / JCM 10045 / NBRC 100440) (Methanococcus jannaschii) protein is Translation initiation factor 5A (eif5a).